The following is a 358-amino-acid chain: Probable protein phosphatase 2C 68 (358 aa).

The 279-residue stretch at 74–352 (RHGAASVAGR…DNISVVVVDL (279 aa)) folds into the PPM-type phosphatase domain. D117, G118, D298, and D343 together coordinate Mn(2+).

The protein belongs to the PP2C family. Mg(2+) is required as a cofactor. Requires Mn(2+) as cofactor.

Its subcellular location is the nucleus. The protein localises to the cytoplasm. It localises to the cytosol. The enzyme catalyses O-phospho-L-seryl-[protein] + H2O = L-seryl-[protein] + phosphate. It catalyses the reaction O-phospho-L-threonyl-[protein] + H2O = L-threonyl-[protein] + phosphate. In terms of biological role, involved in the regulation of abiotic stress responses. Acts as a negative regulator of abscisic acid (ABA) signaling and positive regulator of abiotic stress signaling. May be involved in panicle development. The polypeptide is Probable protein phosphatase 2C 68 (Oryza sativa subsp. japonica (Rice)).